The following is a 98-amino-acid chain: MTKSELIERIVTHQGLLSSKDVELAIKTMLEQMSQCLATGDRIEIRGFGSFSLHYRAPRVGRNPKTGQSVSLDGKFVPHFKPGKELRDRVNEDEEEGV.

Belongs to the bacterial histone-like protein family. Heterodimer of an alpha and a beta chain.

Functionally, this protein is one of the two subunits of integration host factor, a specific DNA-binding protein that functions in genetic recombination as well as in transcriptional and translational control. In Pseudomonas fluorescens (strain SBW25), this protein is Integration host factor subunit beta.